The sequence spans 267 residues: uncharacterized protein (267 aa).

One copy of the WD repeat lies at 50–90; sequence PGLNAVTASKFSPDGRWLLNIADGSGYVQLWDTAKGERVKT.

This is an uncharacterized protein from Deinococcus radiodurans (strain ATCC 13939 / DSM 20539 / JCM 16871 / CCUG 27074 / LMG 4051 / NBRC 15346 / NCIMB 9279 / VKM B-1422 / R1).